A 166-amino-acid chain; its full sequence is Small ribosomal subunit protein uS5 (166 aa).

The S5 DRBM domain maps to 11–74 (LQEKLVAVNR…EQARRNMVKV (64 aa)).

The protein belongs to the universal ribosomal protein uS5 family. In terms of assembly, part of the 30S ribosomal subunit. Contacts proteins S4 and S8.

Functionally, with S4 and S12 plays an important role in translational accuracy. Its function is as follows. Located at the back of the 30S subunit body where it stabilizes the conformation of the head with respect to the body. In Tolumonas auensis (strain DSM 9187 / NBRC 110442 / TA 4), this protein is Small ribosomal subunit protein uS5.